Reading from the N-terminus, the 171-residue chain is Cardioactive peptide (171 aa).

The signal sequence occupies residues 1-26; that stretch reads MQMYHVVLGCSLAILLVILDIPQASC. Positions 27 to 49 are excised as a propeptide; sequence DDVVIQKRQVDPAEMDRLLDPKR. Cys-54 and Cys-60 are oxidised to a cystine. Cysteine amide is present on Cys-60. Residues 64–171 constitute a propeptide that is removed on maturation; that stretch reads RSDESMGTLV…QEEITKPWSR (108 aa). Positions 116 to 171 are disordered; sequence QSNQFGAGMDRPLPLPIAGYRRKRFADPESQAPAPHSNLPRATSQLQEEITKPWSR.

In terms of tissue distribution, central nervous system; most neurons exhibit coexpression with burs.

The protein resides in the secreted. Functionally, cardioregulatory neurohormone that increases heart beat rate during adult wing inflation; has no effect on beat amplitude. The effect of CCAP is both ino- and chronotropic. This chain is Cardioactive peptide, found in Periplaneta americana (American cockroach).